The primary structure comprises 215 residues: ATP-dependent dethiobiotin synthetase BioD (215 aa).

ATP is bound at residue 13–18 (DIGKTI). Mg(2+) is bound at residue Thr-17. Lys-38 is a catalytic residue. Thr-42 provides a ligand contact to substrate. ATP-binding positions include Asp-50, 115 to 118 (EGAG), and 175 to 176 (NH). Mg(2+) contacts are provided by Asp-50 and Glu-115.

This sequence belongs to the dethiobiotin synthetase family. Homodimer. Mg(2+) serves as cofactor.

Its subcellular location is the cytoplasm. It carries out the reaction (7R,8S)-7,8-diammoniononanoate + CO2 + ATP = (4R,5S)-dethiobiotin + ADP + phosphate + 3 H(+). It participates in cofactor biosynthesis; biotin biosynthesis; biotin from 7,8-diaminononanoate: step 1/2. Its function is as follows. Catalyzes a mechanistically unusual reaction, the ATP-dependent insertion of CO2 between the N7 and N8 nitrogen atoms of 7,8-diaminopelargonic acid (DAPA, also called 7,8-diammoniononanoate) to form a ureido ring. In Neisseria meningitidis serogroup A / serotype 4A (strain DSM 15465 / Z2491), this protein is ATP-dependent dethiobiotin synthetase BioD.